A 1647-amino-acid polypeptide reads, in one-letter code: Putative RNA exonuclease pqe-1 (1647 aa).

4 disordered regions span residues 1–199, 274–393, 515–619, and 641–665; these read MFNG…QVQN, QTPA…TSLP, MMQQ…KPVI, and QVKQEIPEVSSTSDATKSDAAPTAR. Low complexity-rich tracts occupy residues 30–64 and 99–131; these read GPSQNAQQQQQQASAPGTSSGGPSQAVSGASSGAS and TQPQQRQQQQSQPQARQMSTQQAANLRKNAAAA. Polar residues predominate over residues 143-170; that stretch reads SREQGNAHQPTAGQIPQSSNQPAQQTHN. Low complexity-rich tracts occupy residues 274–297 and 515–526; these read QTPARGRPANAQLAQNAQQRNPQQ and MMQQQAMQMQMQ. A compositionally biased stretch (pro residues) spans 527-540; sequence NPPPVHQQPPPQQP. A compositionally biased stretch (low complexity) spans 541 to 555; sequence PQQQRQKQQRSQPAP. Residues 592–601 show a composition bias toward basic and acidic residues; that stretch reads SKIEPVDVKP. Over residues 650 to 664 the composition is skewed to low complexity; sequence SSTSDATKSDAAPTA. A coiled-coil region spans residues 686 to 726; sequence SAKKFERMKAEAEDKEDMKKKIAALQEALFNIQEERRVEKE. The segment covering 736-756 has biased composition (polar residues); that stretch reads AVPQNQPASSVQIAQVSTSES. A disordered region spans residues 736–1174; it reads AVPQNQPASS…LRNKKHTTEE (439 aa). Low complexity predominate over residues 761 to 772; sequence TSEAAATETMTS. Over residues 783–793 the composition is skewed to acidic residues; that stretch reads TEGEQEEDEDE. Over residues 822 to 833 the composition is skewed to basic and acidic residues; the sequence is RSDEKREKRHVS. The span at 878-905 shows a compositional bias: acidic residues; it reads DNEDDDADSFVVGDDEPIEYEEEDEDDM. Residues 977 to 992 show a composition bias toward low complexity; sequence TPTASSSMSSSTLSYC. A compositionally biased stretch (basic and acidic residues) spans 1018-1031; it reads KTREENRERKRLAQ. A compositionally biased stretch (polar residues) spans 1038–1054; sequence SETTGVRRTLRSTQDNS. 2 stretches are compositionally biased toward basic and acidic residues: residues 1076–1088 and 1139–1174; these read AKSSENRAKEKQK and NHTEMLDKRNKESEEKRRKDRDELERLRNKKHTTEE. The stretch at 1142–1187 forms a coiled coil; it reads EMLDKRNKESEEKRRKDRDELERLRNKKHTTEEEKIKMARLQNALK. Residues 1477–1637 form the Exonuclease domain; it reads RVYALDCEMV…IFYGLRNPES (161 aa).

Belongs to the REXO1/REXO3 family. As to expression, expressed in the excretory canal, vulval cells, the intestine and in head and tail neurons including ASH, RIC and AIZ neurons.

It localises to the nucleus. Functionally, putative RNA exonuclease which protects neurons from the toxic effects of expanded poly-Q disease proteins. It is unknown whether this is via participation in the pathogenic mechanism underlying poly-Q-induced neurodegeneration or if it is by acting as a genetic modifier of the age of onset or progression of neurodegeneration. Regulates gene expression in neurons. In Caenorhabditis elegans, this protein is Putative RNA exonuclease pqe-1.